Here is a 236-residue protein sequence, read N- to C-terminus: Small ribosomal subunit protein uS2c (236 aa).

The protein belongs to the universal ribosomal protein uS2 family.

The protein localises to the plastid. Its subcellular location is the chloroplast. This Lactuca sativa (Garden lettuce) protein is Small ribosomal subunit protein uS2c (rps2).